Here is a 412-residue protein sequence, read N- to C-terminus: Argininosuccinate synthase (412 aa).

ATP is bound by residues 20 to 28 (AYSGGLDTS) and Ala48. L-citrulline contacts are provided by Tyr100 and Ser105. ATP is bound at residue Gly130. Positions 132, 136, and 137 each coordinate L-aspartate. Residue Asn136 participates in L-citrulline binding. Positions 140, 189, 198, 274, and 286 each coordinate L-citrulline.

Belongs to the argininosuccinate synthase family. Type 1 subfamily. In terms of assembly, homotetramer.

The protein localises to the cytoplasm. It carries out the reaction L-citrulline + L-aspartate + ATP = 2-(N(omega)-L-arginino)succinate + AMP + diphosphate + H(+). The protein operates within amino-acid biosynthesis; L-arginine biosynthesis; L-arginine from L-ornithine and carbamoyl phosphate: step 2/3. The sequence is that of Argininosuccinate synthase from Shewanella pealeana (strain ATCC 700345 / ANG-SQ1).